The sequence spans 98 residues: NADH-ubiquinone oxidoreductase chain 4L (98 aa).

The next 3 helical transmembrane spans lie at 1–21 (MSMV…GLLI), 30–50 (LLCL…TILT), and 61–81 (IILL…LVMI).

It belongs to the complex I subunit 4L family. Core subunit of respiratory chain NADH dehydrogenase (Complex I) which is composed of 45 different subunits.

Its subcellular location is the mitochondrion inner membrane. The catalysed reaction is a ubiquinone + NADH + 5 H(+)(in) = a ubiquinol + NAD(+) + 4 H(+)(out). Functionally, core subunit of the mitochondrial membrane respiratory chain NADH dehydrogenase (Complex I) which catalyzes electron transfer from NADH through the respiratory chain, using ubiquinone as an electron acceptor. Part of the enzyme membrane arm which is embedded in the lipid bilayer and involved in proton translocation. This chain is NADH-ubiquinone oxidoreductase chain 4L (MT-ND4L), found in Martes americana (American marten).